We begin with the raw amino-acid sequence, 197 residues long: Small ribosomal subunit protein uS2 (197 aa).

Belongs to the universal ribosomal protein uS2 family.

The protein is Small ribosomal subunit protein uS2 (rps2) of Archaeoglobus fulgidus (strain ATCC 49558 / DSM 4304 / JCM 9628 / NBRC 100126 / VC-16).